The primary structure comprises 343 residues: Ornithine carbamoyltransferase, catabolic (343 aa).

Residue 62–65 (STRT) coordinates carbamoyl phosphate. His79 serves as a coordination point for Ni(2+). Carbamoyl phosphate is bound by residues Gln89, Arg113, and 140 to 143 (HPTQ). L-ornithine-binding positions include Asn172, Asp236, and 240–241 (SM). Carbamoyl phosphate is bound by residues 278-279 (CL) and Arg323.

It belongs to the aspartate/ornithine carbamoyltransferase superfamily. OTCase family. Homohexamer; dimer of trimers. It depends on Ni(2+) as a cofactor.

Its subcellular location is the cytoplasm. The catalysed reaction is carbamoyl phosphate + L-ornithine = L-citrulline + phosphate + H(+). The protein operates within amino-acid degradation; L-arginine degradation via ADI pathway; carbamoyl phosphate from L-arginine: step 2/2. Involved in the catabolism of arginine. Catalyzes the phosphorolysis of citrulline, the reverse reaction of the biosynthetic one, yielding ornithine and carbamoyl phosphate which serve to generate ATP from ADP. This Lentilactobacillus hilgardii (Lactobacillus hilgardii) protein is Ornithine carbamoyltransferase, catabolic.